Consider the following 122-residue polypeptide: Sperm-egg fusion protein LLCFC1 (122 aa).

The first 28 residues, 1–28 (MPPLAPQLCRAVFLVPILLLLQVKPLNG), serve as a signal peptide directing secretion. The interval 27-51 (NGSPGPKDGSQTEKTPSADQNQEQF) is disordered. The span at 38–49 (TEKTPSADQNQE) shows a compositional bias: polar residues.

It localises to the secreted. In terms of biological role, sperm protein required for fusion of sperm with the egg membrane during fertilization. The protein is Sperm-egg fusion protein LLCFC1 of Homo sapiens (Human).